A 271-amino-acid chain; its full sequence is Putative phosphoenolpyruvate synthase regulatory protein (271 aa).

Residue 151-158 (GVSRSGKT) participates in ADP binding.

The protein belongs to the pyruvate, phosphate/water dikinase regulatory protein family. PSRP subfamily.

The catalysed reaction is [pyruvate, water dikinase] + ADP = [pyruvate, water dikinase]-phosphate + AMP + H(+). It catalyses the reaction [pyruvate, water dikinase]-phosphate + phosphate + H(+) = [pyruvate, water dikinase] + diphosphate. In terms of biological role, bifunctional serine/threonine kinase and phosphorylase involved in the regulation of the phosphoenolpyruvate synthase (PEPS) by catalyzing its phosphorylation/dephosphorylation. In Burkholderia cenocepacia (strain ATCC BAA-245 / DSM 16553 / LMG 16656 / NCTC 13227 / J2315 / CF5610) (Burkholderia cepacia (strain J2315)), this protein is Putative phosphoenolpyruvate synthase regulatory protein.